Here is a 426-residue protein sequence, read N- to C-terminus: Serine--tRNA ligase (426 aa).

233–235 (TAE) contacts L-serine. 264-266 (RSE) lines the ATP pocket. Glu-287 contributes to the L-serine binding site. 351–354 (EISS) is an ATP binding site. Ser-387 is an L-serine binding site.

It belongs to the class-II aminoacyl-tRNA synthetase family. Type-1 seryl-tRNA synthetase subfamily. As to quaternary structure, homodimer. The tRNA molecule binds across the dimer.

It localises to the cytoplasm. It catalyses the reaction tRNA(Ser) + L-serine + ATP = L-seryl-tRNA(Ser) + AMP + diphosphate + H(+). The enzyme catalyses tRNA(Sec) + L-serine + ATP = L-seryl-tRNA(Sec) + AMP + diphosphate + H(+). The protein operates within aminoacyl-tRNA biosynthesis; selenocysteinyl-tRNA(Sec) biosynthesis; L-seryl-tRNA(Sec) from L-serine and tRNA(Sec): step 1/1. Its function is as follows. Catalyzes the attachment of serine to tRNA(Ser). Is also able to aminoacylate tRNA(Sec) with serine, to form the misacylated tRNA L-seryl-tRNA(Sec), which will be further converted into selenocysteinyl-tRNA(Sec). The polypeptide is Serine--tRNA ligase (Clostridium botulinum (strain Langeland / NCTC 10281 / Type F)).